The sequence spans 100 residues: Urease subunit gamma (100 aa).

Belongs to the urease gamma subunit family. Heterotrimer of UreA (gamma), UreB (beta) and UreC (alpha) subunits. Three heterotrimers associate to form the active enzyme.

Its subcellular location is the cytoplasm. It catalyses the reaction urea + 2 H2O + H(+) = hydrogencarbonate + 2 NH4(+). It functions in the pathway nitrogen metabolism; urea degradation; CO(2) and NH(3) from urea (urease route): step 1/1. The chain is Urease subunit gamma from Rhodococcus opacus (strain B4).